We begin with the raw amino-acid sequence, 211 residues long: 3,4-dihydroxy-2-butanone 4-phosphate synthase (211 aa).

D-ribulose 5-phosphate is bound by residues 37–38 (RE), D42, 150–154 (RIGHT), and E174. E38 provides a ligand contact to Mg(2+). H153 contributes to the Mg(2+) binding site.

This sequence belongs to the DHBP synthase family. In terms of assembly, homodimer. Mg(2+) serves as cofactor. The cofactor is Mn(2+).

The enzyme catalyses D-ribulose 5-phosphate = (2S)-2-hydroxy-3-oxobutyl phosphate + formate + H(+). The protein operates within cofactor biosynthesis; riboflavin biosynthesis; 2-hydroxy-3-oxobutyl phosphate from D-ribulose 5-phosphate: step 1/1. Catalyzes the conversion of D-ribulose 5-phosphate to formate and 3,4-dihydroxy-2-butanone 4-phosphate. The sequence is that of 3,4-dihydroxy-2-butanone 4-phosphate synthase from Buchnera aphidicola subsp. Baizongia pistaciae (strain Bp).